A 552-amino-acid polypeptide reads, in one-letter code: Non-structural protein NS1 (552 aa).

It belongs to the orbivirus non-structural protein NS1 family.

The sequence is that of Non-structural protein NS1 (Segment-5) from Antilocapra americana (Pronghorn).